Consider the following 576-residue polypeptide: A-type ATP synthase subunit A (576 aa).

Residue 228-235 (GGFGTGKT) participates in ATP binding.

This sequence belongs to the ATPase alpha/beta chains family. Has multiple subunits with at least A(3), B(3), C, D, E, F, H, I and proteolipid K(x).

Its subcellular location is the cell membrane. It catalyses the reaction ATP + H2O + 4 H(+)(in) = ADP + phosphate + 5 H(+)(out). Component of the A-type ATP synthase that produces ATP from ADP in the presence of a proton gradient across the membrane. The A chain is the catalytic subunit. The chain is A-type ATP synthase subunit A from Methanothrix thermoacetophila (strain DSM 6194 / JCM 14653 / NBRC 101360 / PT) (Methanosaeta thermophila).